The sequence spans 460 residues: V-type ATP synthase beta chain (460 aa).

The protein belongs to the ATPase alpha/beta chains family.

Functionally, produces ATP from ADP in the presence of a proton gradient across the membrane. The V-type beta chain is a regulatory subunit. This chain is V-type ATP synthase beta chain, found in Acetivibrio thermocellus (strain ATCC 27405 / DSM 1237 / JCM 9322 / NBRC 103400 / NCIMB 10682 / NRRL B-4536 / VPI 7372) (Clostridium thermocellum).